The following is a 149-amino-acid chain: SPbeta prophage-derived putative transcriptional regulator YosT (149 aa).

The chain is SPbeta prophage-derived putative transcriptional regulator YosT (yosT) from Bacillus subtilis (strain 168).